Here is a 281-residue protein sequence, read N- to C-terminus: MDQNPILIQRHHHRQNFAQKAPPAPLFLIHDGGGTVFSYFLLESLGRTVYGISNPNFETESTWENGIASMAEYYVNLIKATYPSGHILLGGWSLGGLIAIQAAHILSNDPELKVVGIVMIDSTFPVEGQFNKARRLAFMAETSTSPDMKEKTRKCMDEARIQSREWKAPSWRSSATETLDNHSQTINVQIHDHVTPTCPPTVLIRALDDGSNNSRDLNETSPTETSNDSETQALGFDRYQNFNLRYVVNTPGDHFSIFNKENVKELSKKVKEACDKLVMKS.

The segment at 207–233 (LDDGSNNSRDLNETSPTETSNDSETQA) is disordered. Positions 210–232 (GSNNSRDLNETSPTETSNDSETQ) are enriched in polar residues.

It belongs to the AMT4 thioesterase family.

It participates in mycotoxin biosynthesis. In terms of biological role, probable thioesterase; part of the gene cluster that mediates the biosynthesis of pneumocandins, lipohexapeptides of the echinocandin family that prevent fungal cell wall formation by non-competitive inhibition of beta-1,3-glucan synthase. The 10,12-dimethylmyristoyl side chain is synthesized by the reducing polyketide synthase gloL/GLPKS4. The thioesterase gloN/GLHYD exclusively interacts with gloL/GLPKS4 to maintain turnover of the polyketide side chain. The 10R,12S-dimethylmyristic acid is then transferred to the first thiolation domain of the nonribosomal peptide synthetase gloA/GLNRPS4 by the acyl-AMP ligase gloD/GLligase, followed by its acylation to L-ornithine to trigger elongation of the cyclic hexapeptide. L-ornithine, 4R-hydroxyl-L-proline (generated from L-proline by the dioxygenase gloF/GLOXY2), 3S-hydroxyl-L-homotyrosine (generated by gloG/GLHtyB, gloH/GLHtyA, gloI/GLHtyC, gloJ/GLHtyD and hydroxylated at C-3 by the dioxygenase gloM/GLOXY1), 3R-hydroxyl-L-glutamine (generated from L-glutamine probably by the dioxygenase gloE/GLOXY3) and 3S-hydroxyl-L-proline (generated from L-proline by the dioxygenase gloF/GLOXY2 to yield pneumocandin B0), or 3S-hydroxyl-4S-methyl-L-proline (generated from L-leucine by the dioxygenase gloC/GLOXY4 to yield pneumocandin A0) are sequentially added to the growing chain. The last C domain of gloA/GLNRPS4 is proposed to be responsible for cyclization by condensation to form the peptide bond between L-ornithine and 3S-hydroxyl-4S-methyl-L-proline (for pneumocandin A0) or 3S-hydroxyl-L-proline (for pneumocandin B0). Finally, the subsequent C-4 hydroxylation of 3S-hydroxyl-L-homotyrosine and L-ornithine dihydroxylation at C-4 and C-5 are performed by the cytochrome P450 monooxygenases gloP/GLP450-1 and gloO/GLP450-2, respectively. The sequence is that of Probable thioesterase gloN from Glarea lozoyensis (strain ATCC 20868 / MF5171).